A 360-amino-acid chain; its full sequence is Viral protein TPX (360 aa).

The disordered stretch occupies residues 269 to 289 (TVTPISSPSPTPTPTPTPTPT). One copy of the Thr-Pro(N) repeat lies at 270 to 291 (VTPISSPSPTPTPTPTPTPTPT). Over residues 275-289 (SPSPTPTPTPTPTPT) the composition is skewed to pro residues. The segment at 278–353 (PTPTPTPTPT…PTPTPTPTPT (76 aa)) is 3 Thr-Pro repeats regions and two near identical repeats. The stretch at residues 292–301 (YDITYVVFDV) is a repeat. A Thr-Pro(N) repeat occupies 302–322 (TPSPTPTPTLTSTPTPTPTPT). The segment at residues 323-332 (YDITYVIFDV) is a repeat. Residues 332–360 (VTPSPTPTPTPTPTPTPTPTPTSTTSSNI) are disordered. One copy of the Thr-Pro(N) repeat lies at 333–353 (TPSPTPTPTPTPTPTPTPTPT). Residues 335 to 351 (SPTPTPTPTPTPTPTPT) show a composition bias toward pro residues.

The chain is Viral protein TPX from Thermoproteus tenax (TTV1).